The primary structure comprises 361 residues: Alanine racemase (361 aa).

The Proton acceptor; specific for D-alanine role is filled by lysine 34. Lysine 34 carries the N6-(pyridoxal phosphate)lysine modification. Arginine 129 lines the substrate pocket. The active-site Proton acceptor; specific for L-alanine is tyrosine 256. A substrate-binding site is contributed by methionine 304.

It belongs to the alanine racemase family. In terms of assembly, homodimer. Pyridoxal 5'-phosphate serves as cofactor.

The catalysed reaction is L-alanine = D-alanine. It functions in the pathway amino-acid biosynthesis; D-alanine biosynthesis; D-alanine from L-alanine: step 1/1. Functionally, catalyzes the interconversion of L-alanine and D-alanine. May also act on other amino acids. The protein is Alanine racemase (alr) of Corynebacterium glutamicum (strain ATCC 13032 / DSM 20300 / JCM 1318 / BCRC 11384 / CCUG 27702 / LMG 3730 / NBRC 12168 / NCIMB 10025 / NRRL B-2784 / 534).